A 431-amino-acid polypeptide reads, in one-letter code: MAQQKVAVVLGLQWGDEGKGKLVDVLAEDADVVARFAGGNNAGHTVVVDNISYDFHLLPSGIGHAKCDCVIGNGVVIHLPGLYEEVEKNMAKGPHLQGWQSRLKISDRAHLVLDLHQKVDGMKEEERGLDKIGTTKKGIGPTYSSKAIRHGLRVCDLMGDFGIFKQKFLQVVEHYQKLFPSLEVDVDAQLKAFEGYAEKVRPMVTDTTLLVHRYLKENKRVLLEGANATMLDLDFGTYPYVTSSSCCVGGICTGLGLPPQAVGDVYGVVKAYTTRVGDGAFPTEDFAEVGNYLQTKGHEYGVTTGRKRRCGWLDMMVVNYACMINGVTKICLTKLDVLDELETIKIAVAYKKGGEALLGMPASQQVLNEVEVEYVDMPGWQTNISEIRDFEALPTQAQAYVRKVEELSGVPVKWIGVGPAREAMIIVPPRQ.

GTP contacts are provided by residues 15–21 (GDEGKGK) and 43–45 (GHT). Aspartate 16 serves as the catalytic Proton acceptor. The Mg(2+) site is built by aspartate 16 and glycine 43. IMP-binding positions include 16 to 19 (DEGK), 41 to 44 (NAGH), threonine 135, arginine 149, asparagine 227, threonine 242, and arginine 306. Histidine 44 serves as the catalytic Proton donor. Position 302–308 (302–308 (VTTGRKR)) interacts with substrate. Residues arginine 308, 334 to 336 (KLD), and 416 to 418 (GVG) each bind GTP.

The protein belongs to the adenylosuccinate synthetase family. As to quaternary structure, homodimer. It depends on Mg(2+) as a cofactor.

Its subcellular location is the cytoplasm. It carries out the reaction IMP + L-aspartate + GTP = N(6)-(1,2-dicarboxyethyl)-AMP + GDP + phosphate + 2 H(+). It functions in the pathway purine metabolism; AMP biosynthesis via de novo pathway; AMP from IMP: step 1/2. Plays an important role in the de novo pathway and in the salvage pathway of purine nucleotide biosynthesis. Catalyzes the first committed step in the biosynthesis of AMP from IMP. The sequence is that of Adenylosuccinate synthetase from Monosiga brevicollis (Choanoflagellate).